A 174-amino-acid chain; its full sequence is Urease accessory protein UreE (174 aa).

This sequence belongs to the UreE family.

It is found in the cytoplasm. Functionally, involved in urease metallocenter assembly. Binds nickel. Probably functions as a nickel donor during metallocenter assembly. This Helicobacter hepaticus (strain ATCC 51449 / 3B1) protein is Urease accessory protein UreE.